A 161-amino-acid chain; its full sequence is NNGGRAYIVLSIPNLAHYQLITGFKETLKNKGHPELMDKVGHDFSGNDNIDQVEKAYKKAGVTGHVWQSDGITNCIASFIRGLDRAKKAVANRDSSNGFINKVYYWTVDKYATTREALDAGVDGIMTNYPDVVANVLSESAYKAKFRIATYDDNPWETFKN.

Belongs to the arthropod phospholipase D family. Class II subfamily. Mg(2+) serves as cofactor. Post-translationally, contains 2 disulfide bonds. Expressed by the venom gland.

It is found in the secreted. It carries out the reaction an N-(acyl)-sphingosylphosphocholine = an N-(acyl)-sphingosyl-1,3-cyclic phosphate + choline. The enzyme catalyses an N-(acyl)-sphingosylphosphoethanolamine = an N-(acyl)-sphingosyl-1,3-cyclic phosphate + ethanolamine. It catalyses the reaction a 1-acyl-sn-glycero-3-phosphocholine = a 1-acyl-sn-glycero-2,3-cyclic phosphate + choline. The catalysed reaction is a 1-acyl-sn-glycero-3-phosphoethanolamine = a 1-acyl-sn-glycero-2,3-cyclic phosphate + ethanolamine. Functionally, dermonecrotic toxins cleave the phosphodiester linkage between the phosphate and headgroup of certain phospholipids (sphingolipid and lysolipid substrates), forming an alcohol (often choline) and a cyclic phosphate. This toxin acts on sphingomyelin (SM). It may also act on ceramide phosphoethanolamine (CPE), lysophosphatidylcholine (LPC) and lysophosphatidylethanolamine (LPE), but not on lysophosphatidylserine (LPS), and lysophosphatidylglycerol (LPG). It acts by transphosphatidylation, releasing exclusively cyclic phosphate products as second products. Induces dermonecrosis, hemolysis, increased vascular permeability, edema, inflammatory response, and platelet aggregation. The protein is Dermonecrotic toxin LarSicTox-alphaI-1 of Loxosceles arizonica (Arizona brown spider).